Consider the following 226-residue polypeptide: HTH-type transcriptional regulator Rv0324 (226 aa).

The 95-residue stretch at Arg7–Leu101 folds into the HTH arsR-type domain. Residues Val41–Ser64 constitute a DNA-binding region (H-T-H motif). The Rhodanese domain maps to Glu129–Glu218. The active-site Cysteine persulfide intermediate is Cys177.

In terms of biological role, part of a regulatory network that coordinates tolerance to the antitubercular drug bedaquiline. The polypeptide is HTH-type transcriptional regulator Rv0324 (Mycobacterium tuberculosis (strain ATCC 25618 / H37Rv)).